The primary structure comprises 113 residues: UPF0482 protein YnfB (113 aa).

Positions 1–28 are cleaved as a signal peptide; that stretch reads MKITLSKRIGLLAFLLPCALALSTTVHA.

Belongs to the UPF0482 family.

The chain is UPF0482 protein YnfB from Shigella flexneri serotype 5b (strain 8401).